Consider the following 415-residue polypeptide: Histidine--tRNA ligase (415 aa).

It belongs to the class-II aminoacyl-tRNA synthetase family. Homodimer.

It localises to the cytoplasm. The catalysed reaction is tRNA(His) + L-histidine + ATP = L-histidyl-tRNA(His) + AMP + diphosphate + H(+). The chain is Histidine--tRNA ligase from Idiomarina loihiensis (strain ATCC BAA-735 / DSM 15497 / L2-TR).